The chain runs to 151 residues: Brain ribonuclease (151 aa).

Residues 1–25 (KESAAAKFRRQHMDAGSSSSGNSNY) form a disordered region. Substrate is bound by residues Lys-7 and Arg-10. His-12 functions as the Proton acceptor in the catalytic mechanism. Intrachain disulfides connect Cys-26-Cys-84, Cys-40-Cys-95, Cys-58-Cys-110, and Cys-65-Cys-72. 41-45 (KPVNT) contributes to the substrate binding site. The N-linked (GlcNAc...) asparagine glycan is linked to Asn-62. Positions 66 and 85 each coordinate substrate. The active-site Proton donor is His-119. A glycan (O-linked (GalNAc...) threonine) is linked at Thr-129. A glycan (O-linked (GalNAc...) serine) is linked at Ser-133.

It belongs to the pancreatic ribonuclease family.

Its subcellular location is the secreted. The polypeptide is Brain ribonuclease (BRN) (Axis porcinus (Hog deer)).